A 409-amino-acid polypeptide reads, in one-letter code: DNA replication and repair protein RecF (409 aa).

30–37 (GSNGHGKT) provides a ligand contact to ATP.

This sequence belongs to the RecF family.

The protein localises to the cytoplasm. The RecF protein is involved in DNA metabolism; it is required for DNA replication and normal SOS inducibility. RecF binds preferentially to single-stranded, linear DNA. It also seems to bind ATP. The sequence is that of DNA replication and repair protein RecF from Rhodococcus erythropolis (strain PR4 / NBRC 100887).